Here is a 418-residue protein sequence, read N- to C-terminus: UPF0261 protein BRA1168/BS1330_II1159 (418 aa).

The protein belongs to the UPF0261 family.

This chain is UPF0261 protein BRA1168/BS1330_II1159, found in Brucella suis biovar 1 (strain 1330).